The following is a 208-amino-acid chain: Methyl-CpG-binding domain protein 3-like 2 (208 aa).

The interacts with MBD3 stretch occupies residues 1–89; it reads MGEPAFTSFP…HLEKPQQLCA (89 aa).

The protein belongs to the MBD3L family. As to quaternary structure, interacts (via N-terminus) with MBD3; the interaction is direct. Interacts with MTA1. Interacts with HDAC1. Interacts with HDAC2. Interacts with RBBP4. Interacts with RBBP7. As to expression, detected at low levels in several somatic tissues. Highly expressed in the ovarian teratocarcinoma cell line PA-1.

Its subcellular location is the nucleus. In terms of biological role, may displace the NuRD complex from chromatin. The chain is Methyl-CpG-binding domain protein 3-like 2 (MBD3L2) from Homo sapiens (Human).